A 223-amino-acid chain; its full sequence is MHVLIPAAGSGSRMKAGRNKLLIELEGESLIFWTIKSVLSASLVSWVGIIGQPYDKQELLKSVKNFSNKIKWINGGDTRQKSVFNGLNSLPSTAEKVLIHDGARCLVGPDLINKCAMELEQNDAVILATKVTDTIKIVDNRGYIKETPNRQNLWAAQTPQGFLVKRLRKAHEMAIEKNWTVTDDASLFEMLNWQVKIIEGNSSNIKITSPLDLKIAKLFLKDF.

The protein belongs to the IspD/TarI cytidylyltransferase family. IspD subfamily.

It catalyses the reaction 2-C-methyl-D-erythritol 4-phosphate + CTP + H(+) = 4-CDP-2-C-methyl-D-erythritol + diphosphate. It participates in isoprenoid biosynthesis; isopentenyl diphosphate biosynthesis via DXP pathway; isopentenyl diphosphate from 1-deoxy-D-xylulose 5-phosphate: step 2/6. In terms of biological role, catalyzes the formation of 4-diphosphocytidyl-2-C-methyl-D-erythritol from CTP and 2-C-methyl-D-erythritol 4-phosphate (MEP). The chain is 2-C-methyl-D-erythritol 4-phosphate cytidylyltransferase from Prochlorococcus marinus subsp. pastoris (strain CCMP1986 / NIES-2087 / MED4).